The primary structure comprises 134 residues: Small ribosomal subunit protein uS11 (134 aa).

This sequence belongs to the universal ribosomal protein uS11 family. In terms of assembly, part of the 30S ribosomal subunit. Interacts with proteins S7 and S18. Binds to IF-3.

Its function is as follows. Located on the platform of the 30S subunit, it bridges several disparate RNA helices of the 16S rRNA. Forms part of the Shine-Dalgarno cleft in the 70S ribosome. This is Small ribosomal subunit protein uS11 from Albidiferax ferrireducens (strain ATCC BAA-621 / DSM 15236 / T118) (Rhodoferax ferrireducens).